Here is a 175-residue protein sequence, read N- to C-terminus: FOXL2 neighbor protein (175 aa).

2 disordered regions span residues 1 to 39 (MTRT…PALV) and 70 to 100 (AQKT…GKRR).

In Homo sapiens (Human), this protein is FOXL2 neighbor protein (FOXL2NB).